We begin with the raw amino-acid sequence, 447 residues long: UDP-N-acetylmuramate--L-alanine ligase (447 aa).

108 to 114 (GSHGKTS) serves as a coordination point for ATP.

The protein belongs to the MurCDEF family.

It localises to the cytoplasm. The catalysed reaction is UDP-N-acetyl-alpha-D-muramate + L-alanine + ATP = UDP-N-acetyl-alpha-D-muramoyl-L-alanine + ADP + phosphate + H(+). It functions in the pathway cell wall biogenesis; peptidoglycan biosynthesis. Cell wall formation. This Listeria monocytogenes serotype 4b (strain F2365) protein is UDP-N-acetylmuramate--L-alanine ligase.